The chain runs to 88 residues: LYR motif-containing protein 2 (88 aa).

A mitochondrion-targeting transit peptide spans Met-1–Arg-19.

It belongs to the complex I LYR family.

Its subcellular location is the mitochondrion. Its function is as follows. Involved in efficient integration of the N-module into mitochondrial respiratory chain complex I. This is LYR motif-containing protein 2 (LYRM2) from Homo sapiens (Human).